The sequence spans 120 residues: NADH dehydrogenase [ubiquinone] 1 subunit C2 (120 aa).

The chain crosses the membrane as a helical span at residues 57–76; the sequence is GLHRQLLFVTSFVFAGYFYL.

It belongs to the complex I NDUFC2 subunit family. In terms of assembly, complex I is composed of 45 different subunits. Interacts with TMEM242.

It localises to the mitochondrion inner membrane. Its function is as follows. Accessory subunit of the mitochondrial membrane respiratory chain NADH dehydrogenase (Complex I), that is believed not to be involved in catalysis but required for the complex assembly. Complex I functions in the transfer of electrons from NADH to the respiratory chain. The immediate electron acceptor for the enzyme is believed to be ubiquinone. The protein is NADH dehydrogenase [ubiquinone] 1 subunit C2 of Mus musculus (Mouse).